The chain runs to 121 residues: uncharacterized protein (121 aa).

Positions 1–23 are cleaved as a signal peptide; that stretch reads MNFSTVFQAIIAVLGLTTVTALA. Residues N68 and N84 are each glycosylated (N-linked (GlcNAc...) asparagine).

Post-translationally, N-glycosylated.

This is an uncharacterized protein from Saccharomyces cerevisiae (strain ATCC 204508 / S288c) (Baker's yeast).